The sequence spans 89 residues: Small ribosomal subunit protein uS15 (89 aa).

It belongs to the universal ribosomal protein uS15 family. Part of the 30S ribosomal subunit. Forms a bridge to the 50S subunit in the 70S ribosome, contacting the 23S rRNA.

One of the primary rRNA binding proteins, it binds directly to 16S rRNA where it helps nucleate assembly of the platform of the 30S subunit by binding and bridging several RNA helices of the 16S rRNA. In terms of biological role, forms an intersubunit bridge (bridge B4) with the 23S rRNA of the 50S subunit in the ribosome. This chain is Small ribosomal subunit protein uS15, found in Bacillus pumilus (strain SAFR-032).